The primary structure comprises 146 residues: Probable actin-related protein 2/3 complex subunit 5 (146 aa).

The protein belongs to the ARPC5 family. In terms of assembly, component of the Arp2/3 complex composed of ARP2, ARP3, ARPC1B/p41-ARC, ARPC2/p34-ARC, ARPC3/p21-ARC, ARPC4/p20-ARC and ARPC5/p16-ARC.

The protein resides in the cytoplasm. Its subcellular location is the cytoskeleton. Its function is as follows. Functions as a component of the Arp2/3 complex which is involved in regulation of actin polymerization and together with an activating nucleation-promoting factor (NPF) mediates the formation of branched actin networks. The polypeptide is Probable actin-related protein 2/3 complex subunit 5 (Caenorhabditis elegans).